The chain runs to 103 residues: ATP synthase subunit c (103 aa).

3 helical membrane passes run 3–23 (FLAL…VSGL), 30–50 (SIAG…IGMG), and 74–94 (MFIA…LALI).

This sequence belongs to the ATPase C chain family. F-type ATPases have 2 components, F(1) - the catalytic core - and F(0) - the membrane proton channel. F(1) has five subunits: alpha(3), beta(3), gamma(1), delta(1), epsilon(1). F(0) has three main subunits: a(1), b(2) and c(10-14). The alpha and beta chains form an alternating ring which encloses part of the gamma chain. F(1) is attached to F(0) by a central stalk formed by the gamma and epsilon chains, while a peripheral stalk is formed by the delta and b chains.

It is found in the cell inner membrane. F(1)F(0) ATP synthase produces ATP from ADP in the presence of a proton or sodium gradient. F-type ATPases consist of two structural domains, F(1) containing the extramembraneous catalytic core and F(0) containing the membrane proton channel, linked together by a central stalk and a peripheral stalk. During catalysis, ATP synthesis in the catalytic domain of F(1) is coupled via a rotary mechanism of the central stalk subunits to proton translocation. Functionally, key component of the F(0) channel; it plays a direct role in translocation across the membrane. A homomeric c-ring of between 10-14 subunits forms the central stalk rotor element with the F(1) delta and epsilon subunits. The polypeptide is ATP synthase subunit c (Helicobacter hepaticus (strain ATCC 51449 / 3B1)).